A 114-amino-acid polypeptide reads, in one-letter code: Small nuclear ribonucleoprotein SmD1a (114 aa).

The 73-residue stretch at 2-74 (KLVRFLMKLN…IRYYILPDSL (73 aa)) folds into the Sm domain. Positions 87 to 114 (VKPKKPVAGKAVGRGRGRGRGRGRGRGR) are disordered. A run of 8 repeats spans residues 99–100 (GR), 101–102 (GR), 103–104 (GR), 105–106 (GR), 107–108 (GR), 109–110 (GR), 111–112 (GR), and 113–114 (GR). The interval 99–114 (GRGRGRGRGRGRGRGR) is 8 X 2 AA tandem repeats of G-R.

This sequence belongs to the snRNP core protein family.

The protein localises to the nucleus. It is found in the nucleus speckle. Its subcellular location is the nucleolus. Involved in splicing regulation. Facilitates post-transcriptional gene silencing (PTGS) by limiting the degradation of transgene aberrant RNAs by the RNA quality control (RQC) machinery, thus favoring their entry into cytoplasmic siRNA bodies where they can trigger PTGS. Does not participate in the production of small RNAs. The protein is Small nuclear ribonucleoprotein SmD1a of Arabidopsis thaliana (Mouse-ear cress).